The sequence spans 531 residues: Dimethylnonatriene synthase (531 aa).

The chain crosses the membrane as a helical span at residues T6–A26. Residue C464 participates in heme binding.

It belongs to the cytochrome P450 family. It depends on heme as a cofactor.

It is found in the membrane. The enzyme catalyses (6E,10E)-geranyllinalool + reduced [NADPH--hemoprotein reductase] + O2 = (3E,7E)-4,8,12-trimethyltrideca 1,3,7,11-tetraene + but-3-en-2-one + oxidized [NADPH--hemoprotein reductase] + 2 H2O + H(+). The catalysed reaction is (3S,6E)-nerolidol + reduced [NADPH--hemoprotein reductase] + O2 = (3E)-4,8-dimethylnona-1,3,7-triene + but-3-en-2-one + oxidized [NADPH--hemoprotein reductase] + 2 H2O + H(+). Its pathway is secondary metabolite biosynthesis; terpenoid biosynthesis. Involved in the biosynthesis of homoterpenes, attractants of herbivores parasitoids and predators (e.g. predatory mites and parasitoid wasps). Component of the volatile terpenes biosynthesis pathways. Converts mainly nerolidol to dimethylnonatriene (DMNT) and, to a lower extent, geranyllinalool to trimethyltridecatetraene (TMTT). The chain is Dimethylnonatriene synthase from Zea mays (Maize).